A 484-amino-acid chain; its full sequence is MAAATQFLSQPSSLNPHQLKNQTSQRSRSIPVLSLKSTLKPLKRLSVKAAVVSQNSSKTVTKFDHCFKKSSDGFLYCEGTKVEDIMESVERRPFYLYSKPQITRNLEAYKEALEGVSSVIGYAIKANNNLKILEHLRSLGCGAVLVSGNELRLALRAGFDPTKCIFNGNGKSLEDLVLAAQEGVFVNVDSEFDLNNIVEASRISGKQVNVLLRINPDVDPQVHPYVATGNKNSKFGIRNEKLQWFLDQVKAHPKELKLVGAHCHLGSTITKVDIFRDAAVLMIEYIDEIRRQGFEVSYLNIGGGLGIDYYHAGAVLPTPMDLINTVRELVLSRDLNLIIEPGRSLIANTCCFVNHVTGVKTNGTKNFIVIDGSMAELIRPSLYDAYQHIELVSPPPAEAEVTKFDVVGPVCESADFLGKDRELPTPPQGAGLVVHDAGAYCMSMASTYNLKMRPPEYWVEEDGSITKIRHAETFDDHLRFFEGL.

Polar residues predominate over residues 1 to 28 (MAAATQFLSQPSSLNPHQLKNQTSQRSR). The segment at 1 to 30 (MAAATQFLSQPSSLNPHQLKNQTSQRSRSI) is disordered. The transit peptide at 1–49 (MAAATQFLSQPSSLNPHQLKNQTSQRSRSIPVLSLKSTLKPLKRLSVKA) directs the protein to the chloroplast. Residue alanine 50 is modified to N-acetylalanine. Lysine 125 is subject to N6-(pyridoxal phosphate)lysine. Pyridoxal 5'-phosphate is bound by residues glycine 304 and 340–343 (EPGR). Substrate is bound by residues arginine 343, arginine 379, and tyrosine 383. The Proton donor role is filled by cysteine 411. The substrate site is built by glutamate 412 and tyrosine 440. Position 440 (tyrosine 440) interacts with pyridoxal 5'-phosphate.

Belongs to the Orn/Lys/Arg decarboxylase class-II family. LysA subfamily. As to quaternary structure, homodimer. Pyridoxal 5'-phosphate is required as a cofactor.

The protein resides in the plastid. It localises to the chloroplast. The catalysed reaction is meso-2,6-diaminopimelate + H(+) = L-lysine + CO2. It functions in the pathway amino-acid biosynthesis; L-lysine biosynthesis via DAP pathway; L-lysine from DL-2,6-diaminopimelate: step 1/1. Its function is as follows. Specifically catalyzes the decarboxylation of meso-diaminopimelate (meso-DAP) to L-lysine. This chain is Diaminopimelate decarboxylase 1, chloroplastic (LYSA1), found in Arabidopsis thaliana (Mouse-ear cress).